A 518-amino-acid polypeptide reads, in one-letter code: Glutamate--cysteine ligase (518 aa).

Belongs to the glutamate--cysteine ligase type 1 family. Type 1 subfamily.

The catalysed reaction is L-cysteine + L-glutamate + ATP = gamma-L-glutamyl-L-cysteine + ADP + phosphate + H(+). Its pathway is sulfur metabolism; glutathione biosynthesis; glutathione from L-cysteine and L-glutamate: step 1/2. This chain is Glutamate--cysteine ligase, found in Buchnera aphidicola subsp. Acyrthosiphon pisum (strain 5A).